A 344-amino-acid chain; its full sequence is Aurora kinase B (344 aa).

At threonine 35 the chain carries Phosphothreonine. Serine 62 is subject to Phosphoserine. The residue at position 64 (threonine 64) is a Phosphothreonine. A Protein kinase domain is found at 77 to 327 (FEIGRPLGKG…LAQVSAHPWV (251 aa)). ATP-binding positions include 83–91 (LGKGKFGNV) and lysine 106. Aspartate 200 serves as the catalytic Proton acceptor. Lysine 215 is subject to N6-acetyllysine. The residue at position 227 (serine 227) is a Phosphoserine. The residue at position 232 (threonine 232) is a Phosphothreonine; by autocatalysis.

The protein belongs to the protein kinase superfamily. Ser/Thr protein kinase family. Aurora subfamily. In terms of assembly, component of the chromosomal passenger complex (CPC) composed of at least BIRC5/survivin, CDCA8/borealin, INCENP, AURKB or AURKC; predominantly independent AURKB- and AURKC-containing complexes exist. Associates with RACGAP1 during M phase. Interacts with SPDYC; this interaction may be required for proper localization of active, Thr-232-phosphorylated AURKB form during prometaphase and metaphase. Interacts with p53/TP53. Interacts (via the middle kinase domain) with NOC2L (via the N- and C-terminus domains). Interacts with CDCA1. Interacts with EVI5. Interacts with JTB. Interacts with NDC80. Interacts with PSMA3. Interacts with RNF2/RING1B. Interacts with SEPTIN1. Interacts with SIRT2. Interacts with TACC1. Interacts with TTC28. The phosphorylation of Thr-232 requires the binding to INCENP and occurs by means of an autophosphorylation mechanism. Thr-232 phosphorylation is indispensable for the AURKB kinase activity. Post-translationally, acetylated at Lys-215 by KAT5 at kinetochores, increasing AURKB activity and promoting accurate chromosome segregation in mitosis. In terms of processing, ubiquitinated by different BCR (BTB-CUL3-RBX1) E3 ubiquitin ligase complexes. Ubiquitinated by the BCR(KLHL9-KLHL13) E3 ubiquitin ligase complex, ubiquitination leads to removal from mitotic chromosomes and is required for cytokinesis. During anaphase, the BCR(KLHL21) E3 ubiquitin ligase complex recruits the CPC complex from chromosomes to the spindle midzone and mediates the ubiquitination of AURKB. Ubiquitination of AURKB by BCR(KLHL21) E3 ubiquitin ligase complex may not lead to its degradation by the proteasome. Deubiquitinated by USP35; inhibiting CDH1-mediated degradation of AURKB.

Its subcellular location is the nucleus. It is found in the chromosome. The protein localises to the centromere. It localises to the kinetochore. The protein resides in the cytoplasm. Its subcellular location is the cytoskeleton. It is found in the spindle. The protein localises to the midbody. It carries out the reaction L-seryl-[protein] + ATP = O-phospho-L-seryl-[protein] + ADP + H(+). The enzyme catalyses L-threonyl-[protein] + ATP = O-phospho-L-threonyl-[protein] + ADP + H(+). With respect to regulation, activity is greatly increased when AURKB is within the CPC complex. In particular, AURKB-phosphorylated INCENP acts as an activator of AURKB. Positive feedback between HASPIN and AURKB contributes to CPC localization. Serine/threonine-protein kinase component of the chromosomal passenger complex (CPC), a complex that acts as a key regulator of mitosis. The CPC complex has essential functions at the centromere in ensuring correct chromosome alignment and segregation and is required for chromatin-induced microtubule stabilization and spindle assembly. Involved in the bipolar attachment of spindle microtubules to kinetochores and is a key regulator for the onset of cytokinesis during mitosis. Required for central/midzone spindle assembly and cleavage furrow formation. Key component of the cytokinesis checkpoint, a process required to delay abscission to prevent both premature resolution of intercellular chromosome bridges and accumulation of DNA damage: phosphorylates CHMP4C, leading to retain abscission-competent VPS4 (VPS4A and/or VPS4B) at the midbody ring until abscission checkpoint signaling is terminated at late cytokinesis. AURKB phosphorylates the CPC complex subunits BIRC5/survivin, CDCA8/borealin and INCENP. Phosphorylation of INCENP leads to increased AURKB activity. Other known AURKB substrates involved in centromeric functions and mitosis are CENPA, DES/desmin, GPAF, KIF2C, NSUN2, RACGAP1, SEPTIN1, VIM/vimentin, HASPIN, and histone H3. A positive feedback loop involving HASPIN and AURKB contributes to localization of CPC to centromeres. Phosphorylation of VIM controls vimentin filament segregation in cytokinetic process, whereas histone H3 is phosphorylated at 'Ser-10' and 'Ser-28' during mitosis (H3S10ph and H3S28ph, respectively). AURKB is also required for kinetochore localization of BUB1 and SGO1. Phosphorylation of p53/TP53 negatively regulates its transcriptional activity. Key regulator of active promoters in resting B- and T-lymphocytes: acts by mediating phosphorylation of H3S28ph at active promoters in resting B-cells, inhibiting RNF2/RING1B-mediated ubiquitination of histone H2A and enhancing binding and activity of the USP16 deubiquitinase at transcribed genes. Acts as an inhibitor of CGAS during mitosis: catalyzes phosphorylation of the N-terminus of CGAS during the G2-M transition, blocking CGAS liquid phase separation and activation, and thereby preventing CGAS-induced autoimmunity. Phosphorylates KRT5 during anaphase and telophase. Phosphorylates ATXN10 which promotes phosphorylation of ATXN10 by PLK1 and may play a role in the regulation of cytokinesis and stimulating the proteasomal degradation of ATXN10. This Sus scrofa (Pig) protein is Aurora kinase B (AURKB).